The following is a 124-amino-acid chain: Glutaredoxin-2 (124 aa).

An intrachain disulfide couples cysteine 13 to cysteine 16.

The protein belongs to the glutaredoxin family. Homodimer.

The protein localises to the host cytoplasm. In terms of biological role, glutaredoxin necessary for virion morphogenesis and virus replication. Functions as a thiol-disulfide transfer protein between membrane-associated OPG128 and substrates OPG095 or OPG053. The complete pathway for formation of disulfide bonds in intracellular virion membrane proteins sequentially involves oxidation of OPG072, OPG128 and OPG088. Exhibit thioltransferase and dehydroascorbate reductase activities in vitro. This chain is Glutaredoxin-2 (OPG088), found in Bos taurus (Bovine).